A 525-amino-acid chain; its full sequence is Tigger transposable element-derived protein 2 (525 aa).

Positions 1–52 (MLGKRKRVVLTIKDKLDIIKKLEEGISFKKLSVVYGIGESTVRDIKKNKERI) constitute an HTH psq-type domain. 2 DNA-binding regions (H-T-H motif) span residues 28-48 (FKKL…IKKN) and 100-132 (TICA…FKQR). In terms of domain architecture, HTH CENPB-type spans 67–139 (KRKSMKSSTY…KQRHGIPKAA (73 aa)). The DDE-1 domain maps to 168 to 385 (LQPEQIYGAD…VKSSTITKAW (218 aa)). The tract at residues 442–474 (QVLTDSESAEDQTKAAEQKPSSKSRKTELNPEK) is disordered.

Belongs to the tigger transposable element derived protein family.

The protein resides in the nucleus. This is Tigger transposable element-derived protein 2 (TIGD2) from Homo sapiens (Human).